The following is a 309-amino-acid chain: 2-phospho-L-lactate transferase (309 aa).

2 residues coordinate 7,8-didemethyl-8-hydroxy-5-deazariboflavin: Asp50 and Lys89.

This sequence belongs to the CofD family. As to quaternary structure, homodimer. It depends on Mg(2+) as a cofactor.

The enzyme catalyses (2S)-lactyl-2-diphospho-5'-guanosine + 7,8-didemethyl-8-hydroxy-5-deazariboflavin = oxidized coenzyme F420-0 + GMP + H(+). Its pathway is cofactor biosynthesis; coenzyme F420 biosynthesis. Its function is as follows. Catalyzes the transfer of the 2-phospholactate moiety from (2S)-lactyl-2-diphospho-5'-guanosine to 7,8-didemethyl-8-hydroxy-5-deazariboflavin (FO) with the formation of oxidized coenzyme F420-0 and GMP. The chain is 2-phospho-L-lactate transferase from Methanococcus maripaludis (strain C6 / ATCC BAA-1332).